The sequence spans 120 residues: Holo-[acyl-carrier-protein] synthase (120 aa).

Mg(2+)-binding residues include Asp6 and Glu55.

Belongs to the P-Pant transferase superfamily. AcpS family. Requires Mg(2+) as cofactor.

Its subcellular location is the cytoplasm. The catalysed reaction is apo-[ACP] + CoA = holo-[ACP] + adenosine 3',5'-bisphosphate + H(+). Functionally, transfers the 4'-phosphopantetheine moiety from coenzyme A to a Ser of acyl-carrier-protein. The sequence is that of Holo-[acyl-carrier-protein] synthase from Pelodictyon phaeoclathratiforme (strain DSM 5477 / BU-1).